A 695-amino-acid chain; its full sequence is Elongation factor G (695 aa).

The tr-type G domain maps to D10 to L285. Residues A19–T26, D83–H87, and N137–D140 contribute to the GTP site.

It belongs to the TRAFAC class translation factor GTPase superfamily. Classic translation factor GTPase family. EF-G/EF-2 subfamily.

It is found in the cytoplasm. Catalyzes the GTP-dependent ribosomal translocation step during translation elongation. During this step, the ribosome changes from the pre-translocational (PRE) to the post-translocational (POST) state as the newly formed A-site-bound peptidyl-tRNA and P-site-bound deacylated tRNA move to the P and E sites, respectively. Catalyzes the coordinated movement of the two tRNA molecules, the mRNA and conformational changes in the ribosome. The protein is Elongation factor G of Latilactobacillus sakei subsp. sakei (strain 23K) (Lactobacillus sakei subsp. sakei).